Consider the following 180-residue polypeptide: Type-1 fimbrial protein, C chain (180 aa).

The first 23 residues, 1 to 23, serve as a signal peptide directing secretion; that stretch reads MKLKFISMAVFSALTLGVATNAS. A disulfide bridge links cysteine 44 with cysteine 84.

This sequence belongs to the fimbrial protein family.

It is found in the fimbrium. Its function is as follows. Fimbriae (also called pili), polar filaments radiating from the surface of the bacterium to a length of 0.5-1.5 micrometers and numbering 100-300 per cell, enable bacteria to colonize the epithelium of specific host organs. In Escherichia coli O6:H1 (strain CFT073 / ATCC 700928 / UPEC), this protein is Type-1 fimbrial protein, C chain (pilC).